The primary structure comprises 147 residues: Peptide deformylase (147 aa).

Residues Cys88 and His130 each contribute to the Fe cation site. The active site involves Glu131. Position 134 (His134) interacts with Fe cation.

The protein belongs to the polypeptide deformylase family. Fe(2+) is required as a cofactor.

It catalyses the reaction N-terminal N-formyl-L-methionyl-[peptide] + H2O = N-terminal L-methionyl-[peptide] + formate. Its function is as follows. Removes the formyl group from the N-terminal Met of newly synthesized proteins. Requires at least a dipeptide for an efficient rate of reaction. N-terminal L-methionine is a prerequisite for activity but the enzyme has broad specificity at other positions. The protein is Peptide deformylase of Alkaliphilus metalliredigens (strain QYMF).